A 159-amino-acid chain; its full sequence is Phosphopantetheine adenylyltransferase (159 aa).

Thr10 lines the substrate pocket. Residues 10 to 11 (TF) and His18 each bind ATP. Substrate is bound by residues Lys42, Met74, and Arg88. ATP-binding positions include 89–91 (GLR), Glu99, and 124–130 (WSFISSS).

The protein belongs to the bacterial CoaD family. As to quaternary structure, homohexamer. It depends on Mg(2+) as a cofactor.

It localises to the cytoplasm. It catalyses the reaction (R)-4'-phosphopantetheine + ATP + H(+) = 3'-dephospho-CoA + diphosphate. It participates in cofactor biosynthesis; coenzyme A biosynthesis; CoA from (R)-pantothenate: step 4/5. Reversibly transfers an adenylyl group from ATP to 4'-phosphopantetheine, yielding dephospho-CoA (dPCoA) and pyrophosphate. In Yersinia pestis, this protein is Phosphopantetheine adenylyltransferase.